The sequence spans 507 residues: MTQSDFFSLDGISKRFGVVQALDNVSIAFRPGEVLALVGENGAGKSTMMRILEGVSGPDTGTVRHGSTPIVFGEPRDSHRAGIRVIHQEPEIVPNLTVAENIFVGELPRLAGVLLDWRKLEEQTDRVLATFGMQQDMRPRQLCGTLGPAQRQMIEIMRAIRAGGRLIAFDEPTSSLTDDEARRLFSVVRRLREKGTSIIYISHRLNEIIDLADRIVVLRDGRLVDDSPAAGASEQTIAKLMVGRNIDDLFTRETWRSGEQLLDVAGLTTDRVNDVSLRVRRGEVLGIAGLMGAGRSELAKAIVGYDRRIAGTIAMNGVPVLPNSPHAAIVAGIGFAPEDRKHEALLLFRSILDNAALCVPDKTSSFGFFNRRKAMEIVSPLAAKMSIKAPNLDEQVSKLSGGNQQKVVLARWLARQPMLLILDEPTRGIDIGAKAEIYRLIDELAASGIGIILISSEMPELIGLADRVLVMAGGRITAELARPDIDEATILKHAMPQSASSPGDYIQ.

2 consecutive ABC transporter domains span residues 7–245 and 249–498; these read FSLD…VGRN and LFTR…MPQS. Position 39 to 46 (39 to 46) interacts with ATP; the sequence is GENGAGKS.

The protein belongs to the ABC transporter superfamily. Ribose importer (TC 3.A.1.2.1) family. The complex is composed of an ATP-binding protein (RbsA), two transmembrane proteins (RbsC) and a solute-binding protein (RbsB).

It is found in the cell inner membrane. It carries out the reaction D-ribose(out) + ATP + H2O = D-ribose(in) + ADP + phosphate + H(+). Its function is as follows. Part of the ABC transporter complex RbsABC involved in ribose import. Responsible for energy coupling to the transport system. This is Ribose import ATP-binding protein RbsA 2 from Mesorhizobium japonicum (strain LMG 29417 / CECT 9101 / MAFF 303099) (Mesorhizobium loti (strain MAFF 303099)).